The chain runs to 503 residues: Lysine--tRNA ligase (503 aa).

Positions 414 and 421 each coordinate Mg(2+).

This sequence belongs to the class-II aminoacyl-tRNA synthetase family. Homodimer. Mg(2+) is required as a cofactor.

It localises to the cytoplasm. It catalyses the reaction tRNA(Lys) + L-lysine + ATP = L-lysyl-tRNA(Lys) + AMP + diphosphate. This chain is Lysine--tRNA ligase, found in Laribacter hongkongensis (strain HLHK9).